The chain runs to 858 residues: Myosin-K heavy chain (858 aa).

The Myosin motor domain maps to 7-820 (SGVDDLVLVS…TIFVMEDLLM (814 aa)). An ATP-binding site is contributed by 100–107 (GESGAGKT). The tract at residues 121–265 (SPNNSSGGGI…GGGYGGSSKT (145 aa)) is disordered. 2 stretches are compositionally biased toward gly residues: residues 126 to 139 (SGGG…GNGG) and 157 to 182 (RGMG…SRGG). Over residues 183–228 (GPPPTRGRGGPPPPIPQNRGAPPPVSNGGAPPPVARGPVAPPPTRG) the composition is skewed to pro residues. Residues 233–245 (RGGGPANRGGRGG) show a composition bias toward gly residues. Positions 712-722 (PHYIRCIKPND) are actin-binding. Positions 821-858 (QKIDPIGYKNRVQAYKENEKLAQMKQGKHSMKQKCLIQ) are tail.

It belongs to the TRAFAC class myosin-kinesin ATPase superfamily. Myosin family.

Its subcellular location is the cytoplasm. Its function is as follows. Myosins are actin-based motor molecules with ATPase activity. Involved in phagocytosis and motility, and in the maintenance and dynamics of cell cortex. This is Myosin-K heavy chain (myoK) from Dictyostelium discoideum (Social amoeba).